The following is a 129-amino-acid chain: NADH-ubiquinone oxidoreductase chain 3 (129 aa).

3 helical membrane passes run 4-24 (FYMYLAPIVAGVLIGLNWLLA), 48-68 (AAFSVAFILVAILFLPFDLEI), and 82-102 (GLYGLIILIIFLMMLVIAFIL).

The protein belongs to the complex I subunit 3 family.

The protein resides in the mitochondrion membrane. The catalysed reaction is a ubiquinone + NADH + 5 H(+)(in) = a ubiquinol + NAD(+) + 4 H(+)(out). Functionally, core subunit of the mitochondrial membrane respiratory chain NADH dehydrogenase (Complex I) that is believed to belong to the minimal assembly required for catalysis. Complex I functions in the transfer of electrons from NADH to the respiratory chain. The immediate electron acceptor for the enzyme is believed to be ubiquinone. The protein is NADH-ubiquinone oxidoreductase chain 3 (NAD3) of Candida albicans (strain SC5314 / ATCC MYA-2876) (Yeast).